The following is a 200-amino-acid chain: Glycerol-3-phosphate acyltransferase (200 aa).

A run of 4 helical transmembrane segments spans residues 4 to 24 (ALLA…YWVG), 70 to 90 (ALGS…FAVI), 110 to 130 (LGIL…VWLL), and 158 to 178 (QPLP…GAHR).

The protein belongs to the PlsY family. As to quaternary structure, probably interacts with PlsX.

Its subcellular location is the cell inner membrane. The catalysed reaction is an acyl phosphate + sn-glycerol 3-phosphate = a 1-acyl-sn-glycero-3-phosphate + phosphate. It functions in the pathway lipid metabolism; phospholipid metabolism. Catalyzes the transfer of an acyl group from acyl-phosphate (acyl-PO(4)) to glycerol-3-phosphate (G3P) to form lysophosphatidic acid (LPA). This enzyme utilizes acyl-phosphate as fatty acyl donor, but not acyl-CoA or acyl-ACP. This Synechococcus sp. (strain JA-2-3B'a(2-13)) (Cyanobacteria bacterium Yellowstone B-Prime) protein is Glycerol-3-phosphate acyltransferase.